The following is a 91-amino-acid chain: Islet amyloid polypeptide (91 aa).

An N-terminal signal peptide occupies residues 1–22 (MCLLQLPVVLLLLSAALNTLKA). A propeptide spanning residues 23-34 (TPIASDTDHRVD) is cleaved from the precursor. C38 and C43 are oxidised to a cystine. A Tyrosine amide modification is found at Y73. Residues 77–91 (NAEVVDVELLHYLPL) constitute a propeptide that is removed on maturation.

The protein belongs to the calcitonin family. Can form homodimers. Interacts with IDE and INS. Interaction with INS inhibits homodimerization and fibril formation.

The protein localises to the secreted. Its function is as follows. Amylin/IAPP is a glucoregulatory peptide hormone that plays an important role in the regulation of energy homeostasis. Selectively inhibits insulin-stimulated glucose utilization and glycogen deposition in muscle, while not affecting adipocyte glucose metabolism. IAPP function is mediated by the CALCR-RAMPs (AMYRs) receptor complexes. Amylin can also bind CALCR receptor in the absence of RAMPs, although it is more selective for AMYRs. This is Islet amyloid polypeptide (IAPP) from Octodon degus (Degu).